We begin with the raw amino-acid sequence, 267 residues long: Translation initiation factor 2 subunit alpha (267 aa).

The S1 motif domain maps to 12–83 (GELVVATVKE…RKKQVDVSLK (72 aa)).

This sequence belongs to the eIF-2-alpha family. As to quaternary structure, heterotrimer composed of an alpha, a beta and a gamma chain.

Functionally, eIF-2 functions in the early steps of protein synthesis by forming a ternary complex with GTP and initiator tRNA. In Hyperthermus butylicus (strain DSM 5456 / JCM 9403 / PLM1-5), this protein is Translation initiation factor 2 subunit alpha.